We begin with the raw amino-acid sequence, 203 residues long: METLSQDSLLECQICFNYYSPRRRPKLLDCKHTCCSVCLQQMRTSQKDVRCPWCRGITKLPPGFSVSQLPDDPEVLAVIAIPHTSEHTPVFIKLPSNGCYMLPLPISKERTLLPGDMGCRLLPGSQQKSLTVVTIPAEQQPLQGGAPQEAVEEEPDRRGVAKSSTWSGVCTVILVACVLVFLLGIVLHNMSCISKRFTVISCG.

An RING-type zinc finger spans residues 12–55; the sequence is CQICFNYYSPRRRPKLLDCKHTCCSVCLQQMRTSQKDVRCPWCR. The segment at 106–165 is necessary for interaction with RRAGA; sequence ISKERTLLPGDMGCRLLPGSQQKSLTVVTIPAEQQPLQGGAPQEAVEEEPDRRGVAKSST. The segment at 140–159 is disordered; sequence QPLQGGAPQEAVEEEPDRRG. A helical transmembrane segment spans residues 167 to 187; sequence SGVCTVILVACVLVFLLGIVL.

It belongs to the RNF152 family. Interacts with RRAGA (inactive GDP-bound form); stimulated by amino acid starvation. Interacts with SEC16A. Post-translationally, ubiquitinated. Autoubiquitinated in vitro, leading to its degradation by the proteasome.

It is found in the lysosome membrane. It carries out the reaction S-ubiquitinyl-[E2 ubiquitin-conjugating enzyme]-L-cysteine + [acceptor protein]-L-lysine = [E2 ubiquitin-conjugating enzyme]-L-cysteine + N(6)-ubiquitinyl-[acceptor protein]-L-lysine.. It functions in the pathway protein modification; protein ubiquitination. E3 ubiquitin-protein ligase that acts as a negative regulator of mTORC1 signaling by mediating ubiquitination of RagA/RRAGA and RHEB. Catalyzes 'Lys-63'-linked polyubiquitination of RagA/RRAGA in response to amino acid starvation, thereby regulating mTORC1 signaling. Also mediates monoubiquitination of RHEB, promoting its association with the TSC-TBC complex and subsequent inhibition. Also mediates 'Lys-48'-linked polyubiquitination of target proteins and their subsequent targeting to the proteasome for degradation. Induces apoptosis when overexpressed. The sequence is that of E3 ubiquitin-protein ligase RNF152 from Rattus norvegicus (Rat).